An 86-amino-acid polypeptide reads, in one-letter code: MRSHQMAAFFAVSLMMMVVLGALSAPIPSPRPIEDIYPSQLPDAGTAQIVAGDSGILPTLLAVGFDPNDRSVLKPVKNSMTQRNTA.

The first 24 residues, 1 to 24 (MRSHQMAAFFAVSLMMMVVLGALS), serve as a signal peptide directing secretion.

Belongs to the lep1 family. In terms of assembly, interacts at the cell wall with secreted rep1 repellent peptides.

The protein resides in the secreted. It localises to the cell wall. Its function is as follows. Core effector contributing to spore formation and tumor formation at the host plant. Modulates surface hydrophobicity promoting cell-cell or cell-surface contacts. Lep1 and rep1 interact in aerial hyphae to form a strong hydrophobic layer. Plays a crucial role in hyphal aggregation that might be a prerequisite for strong proliferation of diploid cells and for induction of the morphological changes associated with spore formation. This chain is Late effector protein 1, found in Mycosarcoma maydis (Corn smut fungus).